The chain runs to 351 residues: Cytochrome c biogenesis protein CcsA (351 aa).

Transmembrane regions (helical) follow at residues 12–32 (NISF…AAFP), 37–57 (LSIL…TLLG), 68–88 (ISNL…IHLI), 97–117 (LVGV…ALTL), 143–163 (MMLS…FLII), 259–279 (IIGL…VWAN), 294–314 (WALI…TKGW), and 320–340 (AILA…VNLL).

The protein belongs to the CcmF/CycK/Ccl1/NrfE/CcsA family. May interact with ccs1.

The protein localises to the cellular thylakoid membrane. Functionally, required during biogenesis of c-type cytochromes (cytochrome c6 and cytochrome f) at the step of heme attachment. The protein is Cytochrome c biogenesis protein CcsA of Trichodesmium erythraeum (strain IMS101).